Here is a 198-residue protein sequence, read N- to C-terminus: uncharacterized protein (198 aa).

A coiled-coil region spans residues 20 to 58 (ERVRRDEELARLSADKEQAKNDLEESKRRIARLRGTVYE). Positions 144 to 198 (LSNRKTKNPESDRRRQSRKKKSTQIQASDEMKHRRHHVHKVHHYSQKQSSSTTRR) are disordered. The span at 176–188 (HRRHHVHKVHHYS) shows a compositional bias: basic residues. Over residues 189 to 198 (QKQSSSTTRR) the composition is skewed to polar residues.

It is found in the nucleus. The protein localises to the nucleolus. This is an uncharacterized protein from Schizosaccharomyces pombe (strain 972 / ATCC 24843) (Fission yeast).